A 454-amino-acid polypeptide reads, in one-letter code: N-myc 2 proto-oncogene protein (454 aa).

3 disordered regions span residues 132–166, 230–269, and 325–374; these read SEKM…HSGT, VAAP…DEEE, and PSPY…VRRR. The segment covering 151–161 has biased composition (low complexity); it reads PGAGAASPAGR. Positions 256-269 are enriched in acidic residues; sequence ALSDEVDEEEDEEE. The segment covering 363 to 374 has biased composition (basic and acidic residues); that stretch reads RKSDSEDSVRRR. A bHLH domain is found at 371–423; sequence VRRRNHNILERQRRNDLRSSFTTLRDHVPELVKNEKAAKVVILKKACEYVHYL. The tract at residues 423-444 is leucine-zipper; it reads LQAKEHQLLMEKEKLQARQQQL.

In terms of assembly, efficient DNA binding requires dimerization with another bHLH protein.

It localises to the nucleus. The protein is N-myc 2 proto-oncogene protein (N-MYC2) of Marmota monax (Woodchuck).